Reading from the N-terminus, the 306-residue chain is Acyl transferase (306 aa).

Active-site charge relay system residues include S117, D214, and H244.

It belongs to the LuxD family.

It participates in lipid metabolism; fatty acid reduction for biolumincescence. In terms of biological role, acyl transferase is part of the fatty acid reductase system required for aldehyde biosynthesis; it produces fatty acids for the luminescent reaction. The sequence is that of Acyl transferase from Photobacterium phosphoreum.